Reading from the N-terminus, the 232-residue chain is Protein G1-like3 (232 aa).

2 disordered regions span residues 20–77 (AGLL…YEAQ) and 189–232 (ARAR…GAAC). Gly residues predominate over residues 38–53 (AGGGGGGGGDGAGGSS). Positions 73-200 (RYEAQKRRDW…ARGVSYEKKK (128 aa)) constitute an ALOG domain. Positions 198 to 202 (KKKRK) match the Nuclear localization signal motif. Pro residues predominate over residues 216–232 (PHPPPPPPPPPSAGAAC).

It belongs to the plant homeotic and developmental regulators ALOG protein family.

It localises to the nucleus. Functionally, probable transcription regulator that acts as a developmental regulator by promoting cell growth in response to light. In Oryza sativa subsp. indica (Rice), this protein is Protein G1-like3.